A 340-amino-acid polypeptide reads, in one-letter code: Ribosomal RNA large subunit methyltransferase F (340 aa).

This sequence belongs to the methyltransferase superfamily. METTL16/RlmF family.

The protein resides in the cytoplasm. It catalyses the reaction adenosine(1618) in 23S rRNA + S-adenosyl-L-methionine = N(6)-methyladenosine(1618) in 23S rRNA + S-adenosyl-L-homocysteine + H(+). Its function is as follows. Specifically methylates the adenine in position 1618 of 23S rRNA. This Dechloromonas aromatica (strain RCB) protein is Ribosomal RNA large subunit methyltransferase F.